We begin with the raw amino-acid sequence, 272 residues long: Tryptophan synthase alpha chain (272 aa).

Residues glutamate 53 and aspartate 64 each act as proton acceptor in the active site.

Belongs to the TrpA family. Tetramer of two alpha and two beta chains.

The enzyme catalyses (1S,2R)-1-C-(indol-3-yl)glycerol 3-phosphate + L-serine = D-glyceraldehyde 3-phosphate + L-tryptophan + H2O. Its pathway is amino-acid biosynthesis; L-tryptophan biosynthesis; L-tryptophan from chorismate: step 5/5. In terms of biological role, the alpha subunit is responsible for the aldol cleavage of indoleglycerol phosphate to indole and glyceraldehyde 3-phosphate. This Xanthomonas campestris pv. campestris (strain 8004) protein is Tryptophan synthase alpha chain.